We begin with the raw amino-acid sequence, 426 residues long: Bile acid CoA-transferase BaiF (426 aa).

Residue D168 is the Nucleophile of the active site.

This sequence belongs to the CoA-transferase III family.

It catalyses the reaction lithocholoyl-CoA + cholate = choloyl-CoA + lithocholate. The enzyme catalyses deoxycholoyl-CoA + cholate = choloyl-CoA + deoxycholate. It carries out the reaction allodeoxycholoyl-CoA + cholate = allodeoxycholate + choloyl-CoA. The catalysed reaction is allocholate + deoxycholoyl-CoA = allocholoyl-CoA + deoxycholate. It catalyses the reaction allocholate + lithocholoyl-CoA = allocholoyl-CoA + lithocholate. The enzyme catalyses allocholate + allodeoxycholoyl-CoA = allocholoyl-CoA + allodeoxycholate. It carries out the reaction lithocholoyl-CoA + chenodeoxycholate = chenodeoxycholoyl-CoA + lithocholate. The catalysed reaction is ursodeoxycholate + deoxycholoyl-CoA = ursodeoxycholoyl-CoA + deoxycholate. It catalyses the reaction ursodeoxycholate + lithocholoyl-CoA = ursodeoxycholoyl-CoA + lithocholate. The enzyme catalyses allodeoxycholoyl-CoA + ursodeoxycholate = ursodeoxycholoyl-CoA + allodeoxycholate. It carries out the reaction beta-muricholate + lithocholoyl-CoA = beta-muricholoyl-CoA + lithocholate. The catalysed reaction is beta-muricholate + deoxycholoyl-CoA = beta-muricholoyl-CoA + deoxycholate. It catalyses the reaction beta-muricholate + allodeoxycholoyl-CoA = beta-muricholoyl-CoA + allodeoxycholate. The enzyme catalyses choloyl-CoA + H2O = cholate + CoA + H(+). It carries out the reaction chenodeoxycholoyl-CoA + H2O = chenodeoxycholate + CoA + H(+). Its pathway is lipid metabolism; bile acid biosynthesis. In terms of biological role, functions in the bile acid 7alpha-dehydroxylation pathway, which forms secondary bile acids via the 7alpha-dehydroxylation of primary bile acids, and is carried out by intestinal anaerobic bacteria. Acts as a bile acid CoA transferase with broad bile acid substrate specificity. Catalyzes the transfer of the CoA moiety of secondary bile acid-CoA compounds to primary bile acids. Can use lithocholoyl-CoA, deoxycholoyl-CoA and allodeoxycholoyl-CoA as bile acid CoA donors and cholate, allocholate, chenodeoxycholate, ursodeoxycholate, and beta-muricholate as bile acid CoA acceptors. Also displays CoA hydrolase activity, being able to catalyze the hydrolysis of choloyl-CoA, 3-dehydrocholoyl-CoA, and chenodeoxycholoyl-CoA, releasing CoA and the corresponding free bile acid. However, this latter activity may not represent the actual activity of this enzyme, since using a transferase rather than hydrolase, the bacteria conserve the thioester bond energy, saving ATP molecules. Shows no hydrolytic activity with acetyl-CoA, isovaleryl-CoA, palmitoyl-CoA, or phenylacetyl-CoA as substrates. This chain is Bile acid CoA-transferase BaiF, found in Clostridium scindens (strain JCM 10418 / VPI 12708).